Consider the following 215-residue polypeptide: Riboflavin synthase (215 aa).

Lumazine-binding repeat units follow at residues 1 to 96 (MFTG…FGGH) and 97 to 193 (FVSG…YRFL). 2,4-dihydroxypteridine contacts are provided by residues 4–6 (GIV), 47–49 (CLT), 61–66 (DVMPET), 100–102 (GHV), Lys-135, 144–146 (SST), and 158–163 (SVIPHT).

As to quaternary structure, homotrimer.

It carries out the reaction 2 6,7-dimethyl-8-(1-D-ribityl)lumazine + H(+) = 5-amino-6-(D-ribitylamino)uracil + riboflavin. The protein operates within cofactor biosynthesis; riboflavin biosynthesis; riboflavin from 2-hydroxy-3-oxobutyl phosphate and 5-amino-6-(D-ribitylamino)uracil: step 2/2. In terms of biological role, catalyzes the dismutation of two molecules of 6,7-dimethyl-8-ribityllumazine, resulting in the formation of riboflavin and 5-amino-6-(D-ribitylamino)uracil. The protein is Riboflavin synthase (ribE) of Bacillus amyloliquefaciens (Bacillus velezensis).